Here is a 111-residue protein sequence, read N- to C-terminus: uncharacterized protein (111 aa).

A run of 4 helical transmembrane segments spans residues 4 to 21 (FITALPIVLLLGFSFVSF), 28 to 47 (LVYFRLALGLFSLVGLYMIY), 51 to 73 (TGIRYFIIYLYASWIVLAAVTAF), and 80 to 102 (SFFFGGLVMTMGYLTYMLIYLGM).

The protein resides in the cell membrane. This is an uncharacterized protein from Bacillus subtilis (strain 168).